The sequence spans 589 residues: PTS system mannitol-specific EIICB component (589 aa).

The Cytoplasmic portion of the chain corresponds to 1–25 (MERKSSLKVRVQKLGTSLSNMVMPN). Residues 14–347 (LGTSLSNMVM…ILKSDNSDDD (334 aa)) form the PTS EIIC type-2 domain. A helical membrane pass occupies residues 26 to 47 (IGAFIAWGVAASLFIATGYLPN). At 48 to 51 (KALD) the chain is on the extracellular side. A helical transmembrane segment spans residues 52-73 (TNVVGPMLKYVLPLLIGYTGGY). Residues 74-136 (NIHKQRGGVI…TGFEMLVNNF (63 aa)) are Cytoplasmic-facing. The helical transmembrane segment at 137 to 158 (SLGLIGFALMVLAFFVIGPVVA) threads the bilayer. Residues 159–167 (QLTEWVGIG) lie on the Extracellular side of the membrane. The chain crosses the membrane as a helical span at residues 168–188 (VEAIVKVHLLPLANLIIEPAK). Residues 189-275 (ILFLNNALNH…VMMKPAMFLA (87 aa)) lie on the Cytoplasmic side of the membrane. The chain crosses the membrane as a helical span at residues 276–295 (VIAGGLTGTFTFQTLGAGLT). Residues 296 to 317 (APASPGSIIAIMGMSPKGWGPH) are Extracellular-facing. Residues 318–339 (LVVLAGVFAAAVASFLVASIIL) form a helical membrane-spanning segment. The Cytoplasmic segment spans residues 340 to 589 (KSDNSDDDSL…YDKLVARMHK (250 aa)). A PTS EIIB type-2 domain is found at 383 to 478 (HQIIFACDAG…SLTNGKASGS (96 aa)). The active-site Phosphocysteine intermediate; for EIIB activity is Cys389. A Phosphocysteine; by EIIA modification is found at Cys389.

Homodimer.

It localises to the cell membrane. It catalyses the reaction D-mannitol(out) + N(pros)-phospho-L-histidyl-[protein] = D-mannitol 1-phosphate(in) + L-histidyl-[protein]. The phosphoenolpyruvate-dependent sugar phosphotransferase system (sugar PTS), a major carbohydrate active transport system, catalyzes the phosphorylation of incoming sugar substrates concomitantly with their translocation across the cell membrane. The enzyme II CmtAB PTS system is involved in D-mannitol transport. This chain is PTS system mannitol-specific EIICB component, found in Streptococcus mutans serotype c (strain ATCC 700610 / UA159).